Reading from the N-terminus, the 652-residue chain is Replication protein E1 (652 aa).

Residues 88–90 (KRK) carry the Nuclear localization signal motif. Phosphoserine; by host occurs at positions 94, 98, and 109. The short motif at 108–117 (LSPRLDAIRI) is the Nuclear export signal element. The interval 145–185 (SESQVPGDAQHEGGGESVQEAEEERGGGDGEAEATGNQETQ) is disordered. Residues 185–351 (QAQEQAADIL…QTVVGHAMQE (167 aa)) are DNA-binding region. The 151-residue stretch at 450–600 (VEFVPFISAL…CPLNSNGDPV (151 aa)) folds into the SF3 helicase domain. 476-483 (GPSDTGKS) is an ATP binding site. Lysine 557 is covalently cross-linked (Glycyl lysine isopeptide (Lys-Gly) (interchain with G-Cter in SUMO)). The disordered stretch occupies residues 620–652 (EGSDQQEEEEEEDEDGVTSRPFRCVPGEITRPL). Acidic residues predominate over residues 623–635 (DQQEEEEEEDEDG).

Belongs to the papillomaviridae E1 protein family. As to quaternary structure, can form hexamers. Interacts with E2 protein; this interaction increases E1 DNA binding specificity. Interacts with host DNA polymerase subunit POLA2. Interacts with host single stranded DNA-binding protein RPA1. Interacts with host TOP1; this interaction stimulates the enzymatic activity of TOP1. In terms of processing, phosphorylated. Sumoylated.

The protein localises to the host nucleus. It carries out the reaction Couples ATP hydrolysis with the unwinding of duplex DNA by translocating in the 3'-5' direction.. The enzyme catalyses ATP + H2O = ADP + phosphate + H(+). In terms of biological role, ATP-dependent DNA 3'-5' helicase required for initiation of viral DNA replication. It forms a complex with the viral E2 protein. The E1-E2 complex binds to the replication origin which contains binding sites for both proteins. During the initial step, a dimer of E1 interacts with a dimer of protein E2 leading to a complex that binds the viral origin of replication with high specificity. Then, a second dimer of E1 displaces the E2 dimer in an ATP-dependent manner to form the E1 tetramer. Following this, two E1 monomers are added to each half of the site, which results in the formation of two E1 trimers on the viral ori. Subsequently, two hexamers will be created. The double hexamer acts as a bi-directional helicase machinery and unwinds the viral DNA and then recruits the host DNA polymerase to start replication. In Human papillomavirus type 61, this protein is Replication protein E1.